The following is a 265-amino-acid chain: 6-carboxyhexanoate--CoA ligase (265 aa).

This sequence belongs to the BioW family. As to quaternary structure, homodimer. The cofactor is Mg(2+).

It carries out the reaction heptanedioate + ATP + CoA = 6-carboxyhexanoyl-CoA + AMP + diphosphate. It participates in metabolic intermediate metabolism; pimeloyl-CoA biosynthesis; pimeloyl-CoA from pimelate: step 1/1. In terms of biological role, catalyzes the transformation of pimelate into pimeloyl-CoA with concomitant hydrolysis of ATP to AMP. The sequence is that of 6-carboxyhexanoate--CoA ligase from Syntrophotalea carbinolica (strain DSM 2380 / NBRC 103641 / GraBd1) (Pelobacter carbinolicus).